We begin with the raw amino-acid sequence, 260 residues long: Transmembrane protein 70, mitochondrial (260 aa).

A mitochondrion-targeting transit peptide spans 1-81 (MLFLALGSPW…PVYWEGYVRF (81 aa)). Residues 82–102 (LNTPSDKSEDGRLIYTGNMAR) lie on the Mitochondrial matrix side of the membrane. A helical transmembrane segment spans residues 103–123 (AVFGVKCFSYSTSLIGLTFLP). At 124 to 141 (YIFTQNNAISESVPLPIQ) the chain is on the mitochondrial intermembrane side. A helical membrane pass occupies residues 142-162 (IIFYGIMGSFTVITPVLLHFI). Over 163 to 260 (TKGYVIRLYH…SEEKRHKDDK (98 aa)) the chain is Mitochondrial matrix.

Belongs to the TMEM70 family. Homooligomer. Interacts (homooligomer form) with ATP5MC1; this interaction facilitates the oligomer formation of subunit c/ATP5MC1 (c-ring) and the c-ring membrane insertion and also protects ATP5MC1 against intramitochondrial proteolysis. Interacts with the core subunits TMEM126B, NDUFAF1, ECSIT and ACAD9 of the MCIA complex. Interacts with ATP5MC3, TMEM242 and TIMMDC1. Lower expressed in the heart than in the liver (at protein level).

The protein localises to the mitochondrion inner membrane. Its function is as follows. Scaffold protein that participates in the c-ring assembly of mitochondrial ATP synthase (F(1)F(0) ATP synthase or complex V) by facilitating the membrane insertion and oligomer formation of the subunit c/ATP5MC1 through its interaction. Therefore, participates in the early stage of mitochondrial ATP synthase biogenesis and also protects subunit c/ATP5MC1 against intramitochondrial proteolysis. In addition, binds the mitochondrial proton-transporting ATP synthase complexes I and may play a role in the stability of its membrane-bound subassemblies. The protein is Transmembrane protein 70, mitochondrial of Homo sapiens (Human).